The chain runs to 351 residues: Adenine deaminase (351 aa).

Zn(2+)-binding residues include His20, His22, and His200. The active-site Proton donor is the Glu203. Asp281 is a binding site for Zn(2+). Position 282 (Asp282) interacts with substrate.

Belongs to the metallo-dependent hydrolases superfamily. Adenosine and AMP deaminases family. Adenine deaminase type 2 subfamily. Zn(2+) serves as cofactor.

It catalyses the reaction adenine + H2O + H(+) = hypoxanthine + NH4(+). In terms of biological role, catalyzes the hydrolytic deamination of adenine to hypoxanthine. Plays an important role in the purine salvage pathway and in nitrogen catabolism. This chain is Adenine deaminase, found in Cupriavidus pinatubonensis (strain JMP 134 / LMG 1197) (Cupriavidus necator (strain JMP 134)).